The chain runs to 252 residues: D-aminoacyl-tRNA deacylase (252 aa).

This sequence belongs to the DtdA deacylase family. As to quaternary structure, monomer. Requires Zn(2+) as cofactor.

The enzyme catalyses a D-aminoacyl-tRNA + H2O = a tRNA + a D-alpha-amino acid + H(+). The catalysed reaction is glycyl-tRNA(Ala) + H2O = tRNA(Ala) + glycine + H(+). Functionally, D-aminoacyl-tRNA deacylase with broad substrate specificity. By recycling D-aminoacyl-tRNA to D-amino acids and free tRNA molecules, this enzyme counteracts the toxicity associated with the formation of D-aminoacyl-tRNA entities in vivo. The chain is D-aminoacyl-tRNA deacylase from Pyrobaculum arsenaticum (strain DSM 13514 / JCM 11321 / PZ6).